Here is a 179-residue protein sequence, read N- to C-terminus: Photosystem I assembly protein Ycf3 (179 aa).

3 TPR repeats span residues A29 to P62, S66 to L99, and N126 to N159.

This sequence belongs to the Ycf3 family.

It is found in the plastid. The protein localises to the chloroplast thylakoid membrane. In terms of biological role, essential for the assembly of the photosystem I (PSI) complex. May act as a chaperone-like factor to guide the assembly of the PSI subunits. The sequence is that of Photosystem I assembly protein Ycf3 from Trieres chinensis (Marine centric diatom).